The following is a 303-amino-acid chain: Large ribosomal subunit protein uL18 (303 aa).

Belongs to the universal ribosomal protein uL18 family. In terms of assembly, component of the large ribosomal subunit (LSU).

The protein localises to the cytoplasm. It localises to the nucleus. Component of the ribosome, a large ribonucleoprotein complex responsible for the synthesis of proteins in the cell. The small ribosomal subunit (SSU) binds messenger RNAs (mRNAs) and translates the encoded message by selecting cognate aminoacyl-transfer RNA (tRNA) molecules. The large subunit (LSU) contains the ribosomal catalytic site termed the peptidyl transferase center (PTC), which catalyzes the formation of peptide bonds, thereby polymerizing the amino acids delivered by tRNAs into a polypeptide chain. The nascent polypeptides leave the ribosome through a tunnel in the LSU and interact with protein factors that function in enzymatic processing, targeting, and the membrane insertion of nascent chains at the exit of the ribosomal tunnel. The polypeptide is Large ribosomal subunit protein uL18 (RPL5) (Oikopleura dioica (Tunicate)).